We begin with the raw amino-acid sequence, 438 residues long: Enolase (438 aa).

(2R)-2-phosphoglycerate is bound at residue Gln-174. Glu-216 serves as the catalytic Proton donor. 3 residues coordinate Mg(2+): Asp-253, Glu-297, and Asp-324. (2R)-2-phosphoglycerate contacts are provided by Lys-349, Arg-378, Ser-379, and Lys-400. The Proton acceptor role is filled by Lys-349.

The protein belongs to the enolase family. In terms of assembly, component of the RNA degradosome, a multiprotein complex involved in RNA processing and mRNA degradation. The cofactor is Mg(2+).

The protein localises to the cytoplasm. It localises to the secreted. It is found in the cell surface. The enzyme catalyses (2R)-2-phosphoglycerate = phosphoenolpyruvate + H2O. It participates in carbohydrate degradation; glycolysis; pyruvate from D-glyceraldehyde 3-phosphate: step 4/5. Functionally, catalyzes the reversible conversion of 2-phosphoglycerate (2-PG) into phosphoenolpyruvate (PEP). It is essential for the degradation of carbohydrates via glycolysis. The protein is Enolase of Psychrobacter cryohalolentis (strain ATCC BAA-1226 / DSM 17306 / VKM B-2378 / K5).